Reading from the N-terminus, the 476-residue chain is MLAASASTQQLHNHIEYEIADIELAEFGRKELAIAEKEMPGLMALREKYHKEKPLKGARIAGSLHMTIQTAVLIETLVALGAQVRWASCNIFSTQDHAAAAIASSGIPVFAKKGETLDEYWAYTHRILEWGDQETPNMILDDGGDATGLVILGSKAEQDLSVLERPNNEEEIALYSSIRNKLSDDPSFYSRIKSSIQGVTEETTTGVARLYQMQANGSLPFPAINVNDSVTKSKFDNLYGCRESLVDGIKRATDVMVAGKIALVIGYGDVGKGSAQSLRGLGATVMIAEIDPICALQASMEGYRVVRLNDVVQNVDIFVTATGNFNVITHDHLIRMKDEAIVCNIGHFDNEIDVASLKPYQWENIKPQVDHITLPSGNKIILLAEGRLVNLGCATGHPSFVMSNSFTNQVLAQIELFTQGSNYDNQVYILPKHLDELVARLHLDKIGANLTELTEEQAAYINVPIKGPYKSEQYRY.

Positions 67, 142, and 202 each coordinate substrate. An NAD(+)-binding site is contributed by 203–205 (TTT). Substrate contacts are provided by K232 and D236. Residues N237, 266 to 271 (GYGDVG), E289, N324, 345 to 347 (IGH), and N390 each bind NAD(+).

This sequence belongs to the adenosylhomocysteinase family. The cofactor is NAD(+).

Its subcellular location is the cytoplasm. The catalysed reaction is S-adenosyl-L-homocysteine + H2O = L-homocysteine + adenosine. It participates in amino-acid biosynthesis; L-homocysteine biosynthesis; L-homocysteine from S-adenosyl-L-homocysteine: step 1/1. Functionally, may play a key role in the regulation of the intracellular concentration of adenosylhomocysteine. The chain is Adenosylhomocysteinase from Prochlorococcus marinus (strain MIT 9211).